The chain runs to 399 residues: S-adenosylmethionine synthase (399 aa).

An ATP-binding site is contributed by H17. A Mg(2+)-binding site is contributed by D19. K(+) is bound at residue E45. Residues E58 and Q101 each coordinate L-methionine. The flexible loop stretch occupies residues 101-111; it reads QSADIAMGVDQ. ATP-binding positions include 177-179, 244-245, D253, 259-260, A276, and K280; these read DGK, RF, and RK. D253 serves as a coordination point for L-methionine. An L-methionine-binding site is contributed by K284.

Belongs to the AdoMet synthase family. As to quaternary structure, homotetramer; dimer of dimers. Mg(2+) serves as cofactor. The cofactor is K(+).

The protein localises to the cytoplasm. It catalyses the reaction L-methionine + ATP + H2O = S-adenosyl-L-methionine + phosphate + diphosphate. Its pathway is amino-acid biosynthesis; S-adenosyl-L-methionine biosynthesis; S-adenosyl-L-methionine from L-methionine: step 1/1. In terms of biological role, catalyzes the formation of S-adenosylmethionine (AdoMet) from methionine and ATP. The overall synthetic reaction is composed of two sequential steps, AdoMet formation and the subsequent tripolyphosphate hydrolysis which occurs prior to release of AdoMet from the enzyme. The protein is S-adenosylmethionine synthase of Bacillus thuringiensis subsp. konkukian (strain 97-27).